The sequence spans 231 residues: Lipoprotein-releasing system ATP-binding protein LolD (231 aa).

In terms of domain architecture, ABC transporter spans 9 to 230; sequence FSLKDVGKEY…LRAGELYDQN (222 aa). 45 to 52 contacts ATP; the sequence is GASGSGKS.

It belongs to the ABC transporter superfamily. Lipoprotein translocase (TC 3.A.1.125) family. As to quaternary structure, the complex is composed of two ATP-binding proteins (LolD) and two transmembrane proteins (LolC and LolE).

Its subcellular location is the cell inner membrane. Its function is as follows. Part of the ABC transporter complex LolCDE involved in the translocation of mature outer membrane-directed lipoproteins, from the inner membrane to the periplasmic chaperone, LolA. Responsible for the formation of the LolA-lipoprotein complex in an ATP-dependent manner. In Oleidesulfovibrio alaskensis (strain ATCC BAA-1058 / DSM 17464 / G20) (Desulfovibrio alaskensis), this protein is Lipoprotein-releasing system ATP-binding protein LolD.